Consider the following 312-residue polypeptide: Putative tricarboxylate transport protein, mitochondrial (312 aa).

Solcar repeat units lie at residues 23 to 111 (EKTV…LKSQ), 122 to 208 (VMRL…LKDW), and 218 to 303 (ISKP…IIEF). The next 6 helical transmembrane spans lie at 29–49 (IVIGGITGGIEICITFPTEYV), 75–95 (VNGHGFFGLYRGLSVLLYGSI), 126–146 (LCGLGAGLSEAVFAVTPMETV), 164–184 (FVHGVGCIVKAEGLGGIYKGV), 221–241 (PIVGLMGAVAGAASVYGNTPI), and 286–306 (VCLDVGITFMIYDSIIEFLDV).

Belongs to the mitochondrial carrier (TC 2.A.29) family.

It localises to the mitochondrion inner membrane. Functionally, transport of citrate across inner mitochondrial membrane. The chain is Putative tricarboxylate transport protein, mitochondrial from Caenorhabditis elegans.